Reading from the N-terminus, the 391-residue chain is 1-deoxy-D-xylulose 5-phosphate reductoisomerase (391 aa).

NADPH contacts are provided by Thr17, Gly18, Ser19, Ile20, Asn47, and Asn130. Lys131 provides a ligand contact to 1-deoxy-D-xylulose 5-phosphate. Glu132 contacts NADPH. Asp156 serves as a coordination point for Mn(2+). Residues Ser157, Glu158, Ser182, and His205 each coordinate 1-deoxy-D-xylulose 5-phosphate. Glu158 contributes to the Mn(2+) binding site. Residue Gly211 participates in NADPH binding. The 1-deoxy-D-xylulose 5-phosphate site is built by Ser218, Asn223, Lys224, and Glu227. Glu227 contributes to the Mn(2+) binding site.

The protein belongs to the DXR family. The cofactor is Mg(2+). Mn(2+) serves as cofactor.

It carries out the reaction 2-C-methyl-D-erythritol 4-phosphate + NADP(+) = 1-deoxy-D-xylulose 5-phosphate + NADPH + H(+). It participates in isoprenoid biosynthesis; isopentenyl diphosphate biosynthesis via DXP pathway; isopentenyl diphosphate from 1-deoxy-D-xylulose 5-phosphate: step 1/6. Functionally, catalyzes the NADPH-dependent rearrangement and reduction of 1-deoxy-D-xylulose-5-phosphate (DXP) to 2-C-methyl-D-erythritol 4-phosphate (MEP). This Rhizobium meliloti (strain 1021) (Ensifer meliloti) protein is 1-deoxy-D-xylulose 5-phosphate reductoisomerase.